The chain runs to 60 residues: LKCHQLIPPFWKTCPEGKNLCYKMYMVATPMIPVKRGCIDVCPKNSALVKYMCCNTDKCN.

Cystine bridges form between cysteine 3-cysteine 21, cysteine 14-cysteine 38, cysteine 42-cysteine 53, and cysteine 54-cysteine 59.

It belongs to the three-finger toxin family. Short-chain subfamily. Type IA cytotoxin sub-subfamily. Monomer in solution; Homodimer and oligomer in the presence of negatively charged lipids forming a pore with a size ranging between 20 and 30 Angstroms. Expressed by the venom gland.

The protein resides in the secreted. It is found in the target cell membrane. Its function is as follows. Shows cytolytic activity on many different cells by forming pore in lipid membranes. In vivo, increases heart rate or kills the animal by cardiac arrest. In addition, it binds to heparin with high affinity, interacts with Kv channel-interacting protein 1 (KCNIP1) in a calcium-independent manner, and binds to integrin alpha-V/beta-3 (ITGAV/ITGB3) with moderate affinity. The polypeptide is Cytotoxin 2 (Naja nivea (Cape cobra)).